Consider the following 103-residue polypeptide: MQSQKIRIRLKAFDHRLIDASTQEIVDTAKRTGAQVRGPIPLPTRKERYTVLISPHVNKDARDQYEIRTHKRVLDIVEPTEKTVDALMKLDLAAGVEVQISLG.

The protein belongs to the universal ribosomal protein uS10 family. In terms of assembly, part of the 30S ribosomal subunit.

Functionally, involved in the binding of tRNA to the ribosomes. The sequence is that of Small ribosomal subunit protein uS10 from Marinomonas sp. (strain MWYL1).